The chain runs to 60 residues: Toxin 5 (60 aa).

Cystine bridges form between Cys-3–Cys-22, Cys-17–Cys-39, Cys-41–Cys-52, and Cys-53–Cys-58.

It belongs to the three-finger toxin family. Short-chain subfamily. Type I alpha-neurotoxin sub-subfamily. In terms of tissue distribution, expressed by the venom gland.

It is found in the secreted. Functionally, binds to muscle nicotinic acetylcholine receptor (nAChR) and inhibit acetylcholine from binding to the receptor, thereby impairing neuromuscular transmission. The protein is Toxin 5 of Hydrophis schistosus (Beaked sea snake).